We begin with the raw amino-acid sequence, 113 residues long: Iron-sulfur cluster insertion protein ErpA (113 aa).

Residues Cys-41, Cys-105, and Cys-107 each coordinate iron-sulfur cluster.

This sequence belongs to the HesB/IscA family. In terms of assembly, homodimer. It depends on iron-sulfur cluster as a cofactor.

In terms of biological role, required for insertion of 4Fe-4S clusters for at least IspG. The polypeptide is Iron-sulfur cluster insertion protein ErpA (Vibrio vulnificus (strain CMCP6)).